A 155-amino-acid chain; its full sequence is Ribosomal RNA large subunit methyltransferase H (155 aa).

S-adenosyl-L-methionine contacts are provided by residues Leu72, Gly103, and 122–127; that span reads LSDLTL.

The protein belongs to the RNA methyltransferase RlmH family. As to quaternary structure, homodimer.

It is found in the cytoplasm. It catalyses the reaction pseudouridine(1915) in 23S rRNA + S-adenosyl-L-methionine = N(3)-methylpseudouridine(1915) in 23S rRNA + S-adenosyl-L-homocysteine + H(+). Specifically methylates the pseudouridine at position 1915 (m3Psi1915) in 23S rRNA. The sequence is that of Ribosomal RNA large subunit methyltransferase H from Acidovorax ebreus (strain TPSY) (Diaphorobacter sp. (strain TPSY)).